The sequence spans 339 residues: Lymphocyte-specific protein 1 (339 aa).

The segment at 1-198 is disordered; that stretch reads MAEASSDPGA…SPPLSPTTKL (198 aa). The residue at position 24 (serine 24) is a Phosphoserine. Basic and acidic residues-rich tracts occupy residues 32-43 and 51-61; these read VHEQCQHERDRQ and GGGHVPERPKQ. Serine 111 is subject to Phosphoserine. The span at 117–140 shows a compositional bias: basic and acidic residues; sequence EDRPGLHAYEKEDSDEVHLEELSL. At threonine 175 the chain carries Phosphothreonine. 4 positions are modified to phosphoserine: serine 177, serine 188, serine 189, and serine 193. Over residues 185 to 196 the composition is skewed to polar residues; sequence IEQSSPPLSPTT. Serine 252 is subject to Phosphoserine; by MAPKAPK2. The interval 294–315 is disordered; sequence KSLWEQKGGSKTSSTIKSTPSG. A compositionally biased stretch (low complexity) spans 300 to 315; the sequence is KGGSKTSSTIKSTPSG. N6-acetyllysine is present on lysine 327.

As to quaternary structure, binds actin. In terms of processing, phosphorylated by casein kinase II, protein kinase C and MAPKAPK2. Phosphorylation by PKC induces translocation from membrane to cytoplasm. Phosphorylation by MAPKAPK2 may regulate neutrophil chemotaxis. Activated T-lymphocytes.

It is found in the cell membrane. Its function is as follows. May play a role in mediating neutrophil activation and chemotaxis. The sequence is that of Lymphocyte-specific protein 1 (LSP1) from Homo sapiens (Human).